The primary structure comprises 234 residues: Thymidine kinase, cytosolic (234 aa).

The residue at position 13 (Ser13) is a Phosphoserine. Residues 26-33 (GPMFSGKS), 58-60 (DTR), and 97-100 (DEGQ) contribute to the ATP site. The active-site Proton acceptor is Glu98. Residue Phe128 participates in substrate binding. The Zn(2+) site is built by Cys153 and Cys156. Substrate-binding positions include 172 to 176 (VEVIG) and Tyr181. Cys185 and Cys188 together coordinate Zn(2+). A KEN box motif is present at residues 203–205 (KEN).

The protein belongs to the thymidine kinase family. Homotetramer. Tetramerization from dimerization is induced by ATP and increases catalytic efficiency due to a high affinity for thymidine. Tetramerization is inhibited by phosphorylation at Ser-13. Interacts (via the KEN box) with FZR1. Phosphorylated on Ser-13 in mitosis. Phosphorylation of Ser-13 by CDK1 during mitosis reduces homotetramerization and catalytic efficiency when DNA replication is complete and intracellular TK1 is still present at a high level. In terms of processing, polyubiquitinated. Postmitosis, ubiquitination leads to proteasomal degradation. The KEN box sequence located at the C-terminal region targets for degradation by the anaphase promoting complex (APC/C) activated and rate-limited by FZR1.

It is found in the cytoplasm. It carries out the reaction thymidine + ATP = dTMP + ADP + H(+). Its function is as follows. Cell-cycle-regulated enzyme of importance in nucleotide metabolism. Catalyzes the first enzymatic step in the salvage pathway converting thymidine into thymidine monophosphate. Transcriptional regulation limits expression to the S phase of the cell cycle and transient expression coincides with the oscillation in the intracellular dTTP concentration. In Cricetulus griseus (Chinese hamster), this protein is Thymidine kinase, cytosolic (TK1).